A 116-amino-acid chain; its full sequence is G antigen 2D (116 aa).

Residues 1 to 116 are disordered; sequence MSWRGRSTYR…PEEGEKQSQC (116 aa). 2 stretches are compositionally biased toward acidic residues: residues 31 to 44 and 86 to 95; these read FSDE…EEGE and ECEDGPDGQE. Basic and acidic residues predominate over residues 102 to 116; the sequence is EEVKTPEEGEKQSQC.

It belongs to the GAGE family. As to expression, not expressed in normal tissues, except in testis, but expressed by a large proportion of tumors of various histological origins.

This chain is G antigen 2D (GAGE2D), found in Homo sapiens (Human).